The following is a 316-amino-acid chain: Ribosomal protein L11 methyltransferase (316 aa).

Residues T157, G178, D200, and N243 each coordinate S-adenosyl-L-methionine.

This sequence belongs to the methyltransferase superfamily. PrmA family.

Its subcellular location is the cytoplasm. The catalysed reaction is L-lysyl-[protein] + 3 S-adenosyl-L-methionine = N(6),N(6),N(6)-trimethyl-L-lysyl-[protein] + 3 S-adenosyl-L-homocysteine + 3 H(+). Functionally, methylates ribosomal protein L11. This Streptococcus pneumoniae serotype 2 (strain D39 / NCTC 7466) protein is Ribosomal protein L11 methyltransferase.